A 142-amino-acid polypeptide reads, in one-letter code: Hemoglobin subunit alpha (142 aa).

Residues 2–142 (VLSPTDKSNV…VSTVLTSKYR (141 aa)) enclose the Globin domain. Residue serine 4 is modified to Phosphoserine. Lysine 8 and lysine 12 each carry N6-succinyllysine. Lysine 17 carries the post-translational modification N6-acetyllysine; alternate. N6-succinyllysine; alternate is present on lysine 17. Tyrosine 25 carries the post-translational modification Phosphotyrosine. The residue at position 41 (lysine 41) is an N6-succinyllysine. Histidine 59 contacts O2. Histidine 88 contacts heme b. Serine 103 carries the phosphoserine modification. A Phosphothreonine modification is found at threonine 109. Serine 125 and serine 132 each carry phosphoserine. Phosphothreonine occurs at positions 135 and 138. Serine 139 bears the Phosphoserine mark.

It belongs to the globin family. Heterotetramer of two alpha chains and two beta chains. In terms of tissue distribution, red blood cells.

Functionally, involved in oxygen transport from the lung to the various peripheral tissues. In terms of biological role, hemopressin acts as an antagonist peptide of the cannabinoid receptor CNR1. Hemopressin-binding efficiently blocks cannabinoid receptor CNR1 and subsequent signaling. The chain is Hemoglobin subunit alpha (HBA) from Balaenoptera acutorostrata (Common minke whale).